The following is a 103-amino-acid chain: MTKLKIKSGDTVRVIAGDHKGQEGKVQKVLIEKNKAIVEGVNMISKHEKPSASNPQGGIKEKEAPIHISNLSLIDKNGDTTRVGYKEEDGKKVRFSKKSNEVI.

The protein belongs to the universal ribosomal protein uL24 family. In terms of assembly, part of the 50S ribosomal subunit.

Functionally, one of two assembly initiator proteins, it binds directly to the 5'-end of the 23S rRNA, where it nucleates assembly of the 50S subunit. One of the proteins that surrounds the polypeptide exit tunnel on the outside of the subunit. This Christiangramia forsetii (strain DSM 17595 / CGMCC 1.15422 / KT0803) (Gramella forsetii) protein is Large ribosomal subunit protein uL24.